The chain runs to 125 residues: Protein ApaG (125 aa).

Positions 1-125 (MNDTPRVCVQ…FRLAIATHIH (125 aa)) constitute an ApaG domain.

In Erwinia tasmaniensis (strain DSM 17950 / CFBP 7177 / CIP 109463 / NCPPB 4357 / Et1/99), this protein is Protein ApaG.